The primary structure comprises 449 residues: Adenosylhomocysteinase (449 aa).

S2 is subject to N-acetylserine. K21 is covalently cross-linked (Glycyl lysine isopeptide (Lys-Gly) (interchain with G-Cter in ubiquitin)). Residues T58, D134, and E159 each contribute to the substrate site. 160–162 is a binding site for NAD(+); the sequence is TTT. Substrate contacts are provided by K189 and D193. NAD(+)-binding positions include N194, 223–228, E246, 302–304, and N349; these read GYGDVG and IGH. At T393 the chain carries Phosphothreonine. Residue K413 forms a Glycyl lysine isopeptide (Lys-Gly) (interchain with G-Cter in ubiquitin) linkage.

This sequence belongs to the adenosylhomocysteinase family. NAD(+) serves as cofactor.

It carries out the reaction S-adenosyl-L-homocysteine + H2O = L-homocysteine + adenosine. Its pathway is amino-acid biosynthesis; L-homocysteine biosynthesis; L-homocysteine from S-adenosyl-L-homocysteine: step 1/1. Its function is as follows. Adenosylhomocysteine is a competitive inhibitor of S-adenosyl-L-methionine-dependent methyl transferase reactions; therefore adenosylhomocysteinase may play a key role in the control of methylations via regulation of the intracellular concentration of adenosylhomocysteine. The sequence is that of Adenosylhomocysteinase (SAH1) from Saccharomyces cerevisiae (strain ATCC 204508 / S288c) (Baker's yeast).